Reading from the N-terminus, the 224-residue chain is Tumor protein D52 (224 aa).

The segment at 29–53 is disordered; sequence LSPSGNTSPPGSPTQNVGLLKTEPV. Phosphothreonine is present on threonine 35. Phosphoserine is present on residues serine 36 and serine 40. Positions 61-113 form a coiled coil; the sequence is VTMLSAPEALTEEEQEELRRELTKVEEEIQTLSQVLAAKEKHLAELKRKLGIS. Residues threonine 138, serine 175, and serine 223 each carry the phosphoserine modification. The disordered stretch occupies residues 186–224; it reads KVGGAKPAGGDFGEVLNSTANATSTMTTEPPPEQMTESP. The span at 202 to 224 shows a compositional bias: low complexity; that stretch reads NSTANATSTMTTEPPPEQMTESP.

It belongs to the TPD52 family. As to quaternary structure, forms a homodimer or heterodimer with other members of the family. In terms of tissue distribution, isoform 2 is expressed at higher levels in kidney and brain than in liver, lung, testis and heart. Within the brain, isoform 2 is highly expressed in the granular layer of the cerebellum, the cortex and the hippocampus. In embryos, isoform 2 is expressed in the epithelium of the developing intestine, stomach, olfactory epithelium, neuronal layers of the retina, salivary gland, kidney and dorsal root ganglion.

This chain is Tumor protein D52 (Tpd52), found in Mus musculus (Mouse).